The primary structure comprises 397 residues: Succinyl-diaminopimelate desuccinylase (397 aa).

His-73 contacts Zn(2+). Asp-75 is an active-site residue. Residue Asp-106 coordinates Zn(2+). Glu-140 serves as the catalytic Proton acceptor. Zn(2+)-binding residues include Glu-141, Glu-169, and His-366.

The protein belongs to the peptidase M20A family. DapE subfamily. As to quaternary structure, homodimer. Zn(2+) serves as cofactor. The cofactor is Co(2+).

It catalyses the reaction N-succinyl-(2S,6S)-2,6-diaminopimelate + H2O = (2S,6S)-2,6-diaminopimelate + succinate. Its pathway is amino-acid biosynthesis; L-lysine biosynthesis via DAP pathway; LL-2,6-diaminopimelate from (S)-tetrahydrodipicolinate (succinylase route): step 3/3. Its function is as follows. Catalyzes the hydrolysis of N-succinyl-L,L-diaminopimelic acid (SDAP), forming succinate and LL-2,6-diaminopimelate (DAP), an intermediate involved in the bacterial biosynthesis of lysine and meso-diaminopimelic acid, an essential component of bacterial cell walls. This is Succinyl-diaminopimelate desuccinylase from Rhizobium johnstonii (strain DSM 114642 / LMG 32736 / 3841) (Rhizobium leguminosarum bv. viciae).